Consider the following 105-residue polypeptide: Pyrimidine/purine nucleoside phosphorylase (105 aa).

This sequence belongs to the nucleoside phosphorylase PpnP family.

It carries out the reaction a purine D-ribonucleoside + phosphate = a purine nucleobase + alpha-D-ribose 1-phosphate. The catalysed reaction is adenosine + phosphate = alpha-D-ribose 1-phosphate + adenine. The enzyme catalyses cytidine + phosphate = cytosine + alpha-D-ribose 1-phosphate. It catalyses the reaction guanosine + phosphate = alpha-D-ribose 1-phosphate + guanine. It carries out the reaction inosine + phosphate = alpha-D-ribose 1-phosphate + hypoxanthine. The catalysed reaction is thymidine + phosphate = 2-deoxy-alpha-D-ribose 1-phosphate + thymine. The enzyme catalyses uridine + phosphate = alpha-D-ribose 1-phosphate + uracil. It catalyses the reaction xanthosine + phosphate = alpha-D-ribose 1-phosphate + xanthine. Its function is as follows. Catalyzes the phosphorolysis of diverse nucleosides, yielding D-ribose 1-phosphate and the respective free bases. Can use uridine, adenosine, guanosine, cytidine, thymidine, inosine and xanthosine as substrates. Also catalyzes the reverse reactions. The protein is Pyrimidine/purine nucleoside phosphorylase of Albidiferax ferrireducens (strain ATCC BAA-621 / DSM 15236 / T118) (Rhodoferax ferrireducens).